A 192-amino-acid chain; its full sequence is Adenylate kinase (192 aa).

12–17 (GSGKTT) provides a ligand contact to ATP. The segment at 34–63 (STGDLLRAEVASGSELGKTIDSFISKGNLV) is NMP. AMP contacts are provided by residues T35, R40, 61–63 (NLV), 88–91 (GYPR), and Q95. Residues 130–136 (GRNRGTD) are LID. Residue R131 coordinates ATP. AMP is bound by residues R133 and R145. ATP is bound at residue R173.

The protein belongs to the adenylate kinase family. Monomer.

Its subcellular location is the cytoplasm. It catalyses the reaction AMP + ATP = 2 ADP. It participates in purine metabolism; AMP biosynthesis via salvage pathway; AMP from ADP: step 1/1. In terms of biological role, catalyzes the reversible transfer of the terminal phosphate group between ATP and AMP. Plays an important role in cellular energy homeostasis and in adenine nucleotide metabolism. This Campylobacter jejuni (strain RM1221) protein is Adenylate kinase.